A 460-amino-acid chain; its full sequence is Argininosuccinate lyase (460 aa).

Belongs to the lyase 1 family. Argininosuccinate lyase subfamily.

It localises to the cytoplasm. It catalyses the reaction 2-(N(omega)-L-arginino)succinate = fumarate + L-arginine. It participates in amino-acid biosynthesis; L-arginine biosynthesis; L-arginine from L-ornithine and carbamoyl phosphate: step 3/3. The polypeptide is Argininosuccinate lyase (Desulforamulus reducens (strain ATCC BAA-1160 / DSM 100696 / MI-1) (Desulfotomaculum reducens)).